Reading from the N-terminus, the 199-residue chain is dTTP/UTP pyrophosphatase (199 aa).

Asp-76 functions as the Proton acceptor in the catalytic mechanism.

This sequence belongs to the Maf family. YhdE subfamily. Requires a divalent metal cation as cofactor.

The protein localises to the cytoplasm. It carries out the reaction dTTP + H2O = dTMP + diphosphate + H(+). The enzyme catalyses UTP + H2O = UMP + diphosphate + H(+). In terms of biological role, nucleoside triphosphate pyrophosphatase that hydrolyzes dTTP and UTP. May have a dual role in cell division arrest and in preventing the incorporation of modified nucleotides into cellular nucleic acids. The chain is dTTP/UTP pyrophosphatase from Chlorobaculum parvum (strain DSM 263 / NCIMB 8327) (Chlorobium vibrioforme subsp. thiosulfatophilum).